A 179-amino-acid chain; its full sequence is Large ribosomal subunit protein uL6 (179 aa).

Belongs to the universal ribosomal protein uL6 family. In terms of assembly, part of the 50S ribosomal subunit.

This protein binds to the 23S rRNA, and is important in its secondary structure. It is located near the subunit interface in the base of the L7/L12 stalk, and near the tRNA binding site of the peptidyltransferase center. The chain is Large ribosomal subunit protein uL6 from Syntrophobacter fumaroxidans (strain DSM 10017 / MPOB).